A 362-amino-acid polypeptide reads, in one-letter code: Hepatic sodium/bile acid cotransporter (362 aa).

The Extracellular portion of the chain corresponds to 1–22; the sequence is MEVHNVSAPFNFSLPPGFGHRA. 2 N-linked (GlcNAc...) asparagine glycosylation sites follow: N5 and N11. A helical transmembrane segment spans residues 23–44; the sequence is TDKALSIILVLMLLLIMLSLGC. At 45–47 the chain is on the cytoplasmic side; the sequence is TME. A helical transmembrane segment spans residues 48 to 83; the sequence is FSKIKAHLWKPKGVIVALVAQFGIMPLAAFLLGKIF. Topologically, residues 84–86 are extracellular; it reads HLS. Residues 87-112 form a discontinuously helical membrane-spanning segment; the sequence is NIEALAILICGCSPGGNLSNLFTLAM. Topologically, residues 113-115 are cytoplasmic; it reads KGD. The helical transmembrane segment at 116–142 threads the bilayer; it reads MNLSIVMTTCSSFSALGMMPLLLYVYS. Over 143–156 the chain is Extracellular; that stretch reads KGIYDGDLKDKVPY. A helical transmembrane segment spans residues 157-179; the sequence is KGIMISLVIVLIPCTIGIVLKSK. The Cytoplasmic portion of the chain corresponds to 180-183; it reads RPHY. A helical transmembrane segment spans residues 184–217; sequence VPYILKGGMIITFLLSVAVTALSVINVGNSIMFV. Residues 218-219 lie on the Extracellular side of the membrane; that stretch reads MT. The chain crosses the membrane as a helical span at residues 220 to 243; the sequence is PHLLATSSLMPFSGFLMGYILSAL. Over 244 to 247 the chain is Cytoplasmic; sequence FQLN. The discontinuously helical transmembrane segment at 248-273 threads the bilayer; it reads PSCRRTISMETGFQNIQLCSTILNVT. Over 274–280 the chain is Extracellular; the sequence is FPPEVIG. The helical transmembrane segment at 281-311 threads the bilayer; it reads PLFFFPLLYMIFQLAEGLLIIIIFRCYEKIK. Topologically, residues 312-362 are cytoplasmic; that stretch reads PPKDQTKITYKAAATEDATPAALEKGTHNGNIPPLQPGPSPNGLNSGQMAN. T330 carries the post-translational modification Phosphothreonine. Residues 333–362 form a disordered region; the sequence is ALEKGTHNGNIPPLQPGPSPNGLNSGQMAN. The span at 353 to 362 shows a compositional bias: polar residues; the sequence is NGLNSGQMAN.

The protein belongs to the bile acid:sodium symporter (BASS) (TC 2.A.28) family. As to expression, highly expressed in liver and low expression in kidney.

Its subcellular location is the cell membrane. It catalyses the reaction taurocholate(out) + 2 Na(+)(out) = taurocholate(in) + 2 Na(+)(in). The catalysed reaction is taurochenodeoxycholate(out) + 2 Na(+)(out) = taurochenodeoxycholate(in) + 2 Na(+)(in). The enzyme catalyses tauroursodeoxycholate(out) + 2 Na(+)(out) = tauroursodeoxycholate(in) + 2 Na(+)(in). It carries out the reaction glycocholate(out) + 2 Na(+)(out) = glycocholate(in) + 2 Na(+)(in). It catalyses the reaction estrone 3-sulfate(out) + 2 Na(+)(out) = estrone 3-sulfate(in) + 2 Na(+)(in). The catalysed reaction is cholate(out) + 2 Na(+)(out) = cholate(in) + 2 Na(+)(in). The enzyme catalyses tauronorcholate(out) + 2 Na(+)(out) = tauronorcholate(in) + 2 Na(+)(in). It carries out the reaction taurodeoxycholate(out) + 2 Na(+)(out) = taurodeoxycholate(in) + 2 Na(+)(in). It catalyses the reaction tauroallocholate(out) + 2 Na(+)(out) = tauroallocholate(in) + 2 Na(+)(in). The catalysed reaction is taurohyodeoxycholate(out) + 2 Na(+)(out) = taurohyodeoxycholate(in) + 2 Na(+)(in). The enzyme catalyses taurohyocholate(out) + 2 Na(+)(out) = taurohyocholate(in) + 2 Na(+)(in). It carries out the reaction tauro-beta-muricholate(out) + 2 Na(+)(out) = tauro-beta-muricholate(in) + 2 Na(+)(in). Its activity is regulated as follows. The transport of bile acids is sodium-dependent. As a major transporter of conjugated bile salts from plasma into the hepatocyte, it plays a key role in the enterohepatic circulation of bile salts necessary for the solubilization and absorption of dietary fat and fat-soluble vitamins. It is strictly dependent on the extracellular presence of sodium. It exhibits broad substrate specificity and transports various bile acids, such as taurocholate, cholate, as well as non-bile acid organic compounds, such as estrone sulfate. Works collaboratively with the ileal transporter (NTCP2), the organic solute transporter (OST), and the bile salt export pump (BSEP), to ensure efficacious biological recycling of bile acids during enterohepatic circulation. This Rattus norvegicus (Rat) protein is Hepatic sodium/bile acid cotransporter (Slc10a1).